Reading from the N-terminus, the 260-residue chain is MLIIPAIDIKEGKCVRLTRGDFAQKKIYLDNPCDMAVIWRKQNAKMIHVVDLDAALTGETVNFERIREIVNVLDIPIQVGGGIRSVEAVEKYLDIGVSRVVIGSAAVTNPGLIADLLKKYRPSQIVVGIDAEHGVPKIKGWTESSNMQDYELAGEMKKLGVERIIYTDITRDGMLQGVGYETTKRFAEKAGMKVTASGGATTSDDLHKLRSLEKYGVDSVIIGKALYECNFPCQELWYAYEQGLGIDGEFSTARKKECCS.

The active-site Proton acceptor is the Asp-8. Asp-130 functions as the Proton donor in the catalytic mechanism.

It belongs to the HisA/HisF family.

Its subcellular location is the cytoplasm. The enzyme catalyses 1-(5-phospho-beta-D-ribosyl)-5-[(5-phospho-beta-D-ribosylamino)methylideneamino]imidazole-4-carboxamide = 5-[(5-phospho-1-deoxy-D-ribulos-1-ylimino)methylamino]-1-(5-phospho-beta-D-ribosyl)imidazole-4-carboxamide. The protein operates within amino-acid biosynthesis; L-histidine biosynthesis; L-histidine from 5-phospho-alpha-D-ribose 1-diphosphate: step 4/9. This chain is 1-(5-phosphoribosyl)-5-[(5-phosphoribosylamino)methylideneamino] imidazole-4-carboxamide isomerase, found in Chlorobaculum tepidum (strain ATCC 49652 / DSM 12025 / NBRC 103806 / TLS) (Chlorobium tepidum).